Consider the following 297-residue polypeptide: N-acetylneuraminate lyase (297 aa).

Aceneuramate-binding residues include Ser-47 and Thr-48. Catalysis depends on Tyr-137, which acts as the Proton donor. The Schiff-base intermediate with substrate role is filled by Lys-165. Residues Thr-167, Gly-189, Asp-191, Glu-192, and Ser-208 each contribute to the aceneuramate site.

Belongs to the DapA family. NanA subfamily. Homotetramer.

Its subcellular location is the cytoplasm. It catalyses the reaction aceneuramate = aldehydo-N-acetyl-D-mannosamine + pyruvate. It functions in the pathway amino-sugar metabolism; N-acetylneuraminate degradation; D-fructose 6-phosphate from N-acetylneuraminate: step 1/5. Functionally, catalyzes the reversible aldol cleavage of N-acetylneuraminic acid (sialic acid; Neu5Ac) to form pyruvate and N-acetylmannosamine (ManNAc) via a Schiff base intermediate. The chain is N-acetylneuraminate lyase from Salmonella agona (strain SL483).